A 179-amino-acid polypeptide reads, in one-letter code: Ribosome maturation factor RimM (179 aa).

The PRC barrel domain maps to 96–179 (DNEFYWVDLI…KITVDWGLDY (84 aa)).

It belongs to the RimM family. As to quaternary structure, binds ribosomal protein uS19.

The protein localises to the cytoplasm. Functionally, an accessory protein needed during the final step in the assembly of 30S ribosomal subunit, possibly for assembly of the head region. Essential for efficient processing of 16S rRNA. May be needed both before and after RbfA during the maturation of 16S rRNA. It has affinity for free ribosomal 30S subunits but not for 70S ribosomes. The sequence is that of Ribosome maturation factor RimM from Janthinobacterium sp. (strain Marseille) (Minibacterium massiliensis).